A 382-amino-acid chain; its full sequence is MTNRKSLAMVIPMLLAASNGVNALEVFHKHGNKLELYGSINPNHKLNHSFLANKITSHKDDTNAILGLSGEVNIADELFSYATIEYGIDLSVPEQLLDKQQPNNLRLGYAGFKYGNWGSIDYGRNYGVLHDVQALTNRSPYINKDSIFSYNDNYMTGRSNSLLTYKNDDIFGLIDGMSFILQYQDQSENRAQNQTNGPGWGISIKYETDVGLTAIGSCFSSQRFQSDKSNQDNKLTPSVGAYGLGFKYDANDIYIAAFYGEGRNLTPSLNILSDNNASKDQPYINKTQNIEAIAEYNFHSGFHPSLSYLDSKGQNLNIKDATTVPKNLELAKQINISTRYEFNKNISTYMNYTINLLKSDNVIKEQNIPTDNTIGAGIVYHF.

The first 23 residues, 1 to 23, serve as a signal peptide directing secretion; the sequence is MTNRKSLAMVIPMLLAASNGVNA.

Belongs to the Gram-negative porin family. As to quaternary structure, homotrimer.

The protein resides in the cell outer membrane. Its function is as follows. Forms pores that allow passive diffusion of small molecules across the membrane. This is Porin-like protein BU359 from Buchnera aphidicola subsp. Acyrthosiphon pisum (strain APS) (Acyrthosiphon pisum symbiotic bacterium).